We begin with the raw amino-acid sequence, 302 residues long: 33 kDa chaperonin (302 aa).

Intrachain disulfides connect Cys247–Cys249 and Cys280–Cys283.

The protein belongs to the HSP33 family. In terms of processing, under oxidizing conditions two disulfide bonds are formed involving the reactive cysteines. Under reducing conditions zinc is bound to the reactive cysteines and the protein is inactive.

It is found in the cytoplasm. In terms of biological role, redox regulated molecular chaperone. Protects both thermally unfolding and oxidatively damaged proteins from irreversible aggregation. Plays an important role in the bacterial defense system toward oxidative stress. The protein is 33 kDa chaperonin of Prochlorococcus marinus (strain AS9601).